We begin with the raw amino-acid sequence, 554 residues long: Nonribosomal peptide synthetase ALT12 (554 aa).

Positions 1 to 76 (MASLEHMKRI…TLWEAMNDTQ (76 aa)) constitute a Carrier domain. Residue serine 35 is modified to O-(pantetheine 4'-phosphoryl)serine. Residues 124–434 (VQDNVLCVAP…QRIQNEITST (311 aa)) are condensation.

Belongs to the NRP synthetase family.

It participates in mycotoxin biosynthesis. Its function is as follows. Nonribosomal peptide synthetase; part of the gene cluster that mediates the biosynthesis of the host-selective toxins (HSTs) AAL-toxins, sphinganine-analog mycotoxins responsible for Alternaria stem canker on tomato by the tomato pathotype. The biosynthesis starts with the polyketide synthase ALT1-catalyzed C-16 carbon chain assembly from one starter acetyl-CoA unit with malonyl-CoA extender units. ALT1 also selectively transfers methyl groups at the first and the third cycle of chain elongation for AAL toxin. The C-16 polyketide chain is released from the enzyme by a nucleophilic attack of a carbanion, which is derived from R-carbon of glycin by decarboxylation, on the carbonyl carbon of polyketide acyl chain. This step is probably catalyzed by a pyridoxal 5'-phosphate-dependent aminoacyl transferase ALT4. The respective functions of the other enzymes encoded by the cluster have still to be elucidated. The sphingosine N-acyltransferase-like protein ALT7 seems not to act as a resistance/self-tolerance factor against the toxin in the toxin biosynthetic gene cluster, contrary to what is expected. This Alternaria alternata (Alternaria rot fungus) protein is Nonribosomal peptide synthetase ALT12.